We begin with the raw amino-acid sequence, 222 residues long: Ribonuclease S-3 (222 aa).

A signal peptide spans 1-22 (MFRLQLISAFFILLFSLSPVSA). An intrachain disulfide couples C38 to C44. N50 carries N-linked (GlcNAc...) asparagine glycosylation. The active-site Proton donor is H54. RNA contacts are provided by residues H54, 92–93 (QM), 109–110 (HE), and 113–114 (RH). Disulfide bonds link C68-C117, C177-C210, and C193-C204. Residue E110 is part of the active site. Residue H114 is the Proton acceptor of the active site.

This sequence belongs to the RNase T2 family.

It localises to the secreted. It is found in the extracellular space. It carries out the reaction a ribonucleotidyl-ribonucleotide-RNA + H2O = a 3'-end 3'-phospho-ribonucleotide-RNA + a 5'-end dephospho-ribonucleoside-RNA + H(+). Functionally, self-incompatibility (SI) is the inherited ability of a flowering plant to prevent self-fertilization by discriminating between self and non-self pollen during pollination. In many species, self-incompatibility is controlled by the single, multiallelic locus S. The polypeptide is Ribonuclease S-3 (S3) (Petunia hybrida (Petunia)).